A 252-amino-acid chain; its full sequence is Isoprenyl transferase (252 aa).

Aspartate 32 is an active-site residue. Aspartate 32 is a binding site for Mg(2+). Substrate contacts are provided by residues 33 to 36, tryptophan 37, arginine 45, histidine 49, and 77 to 79; these read GNGR and STE. Asparagine 80 acts as the Proton acceptor in catalysis. Substrate is bound by residues tryptophan 81, arginine 83, arginine 200, and 206–208; that span reads RLS. Position 219 (glutamate 219) interacts with Mg(2+).

The protein belongs to the UPP synthase family. Homodimer. It depends on Mg(2+) as a cofactor.

In terms of biological role, catalyzes the condensation of isopentenyl diphosphate (IPP) with allylic pyrophosphates generating different type of terpenoids. The polypeptide is Isoprenyl transferase (Listeria monocytogenes serovar 1/2a (strain ATCC BAA-679 / EGD-e)).